A 752-amino-acid polypeptide reads, in one-letter code: Ribosomal RNA large subunit methyltransferase K/L (752 aa).

The 112-residue stretch at 53–164 (QMYKICLWTR…RDELHISIDL (112 aa)) folds into the THUMP domain.

Belongs to the methyltransferase superfamily. RlmKL family.

It localises to the cytoplasm. It catalyses the reaction guanosine(2445) in 23S rRNA + S-adenosyl-L-methionine = N(2)-methylguanosine(2445) in 23S rRNA + S-adenosyl-L-homocysteine + H(+). It carries out the reaction guanosine(2069) in 23S rRNA + S-adenosyl-L-methionine = N(2)-methylguanosine(2069) in 23S rRNA + S-adenosyl-L-homocysteine + H(+). Its function is as follows. Specifically methylates the guanine in position 2445 (m2G2445) and the guanine in position 2069 (m7G2069) of 23S rRNA. The sequence is that of Ribosomal RNA large subunit methyltransferase K/L from Saccharophagus degradans (strain 2-40 / ATCC 43961 / DSM 17024).